We begin with the raw amino-acid sequence, 2195 residues long: MGIFDNQNKFEPTISNTLRSLTNGNTQTFDEQVVARNKEIMKKRNEKKKEKDRIIEKGQLTWSYFSDSKQNKEKEKENRQIFNKFKEIVLEMIGDDEIPSDEIASAVYETFMIVANPHKDKASKCESLRQIFHSFFKVAMYNKLSEQVGLLLQIKNPFESDSKASNESVQTIDSFESMEWQLPSKYQLQFEDNDEMSIFDEINHFINTKINNNLDEQKEKEKEKLINTPLSDMVLIHQPGQIKKSKKLKKLAAAGGSNNLESNNVVDSTYTIEWLREECSVISIGLGIPSEEIYNTIMSFLKNKKETIEEDMIGLLGFDHLELIADIIKYRDSILGSVVSGYRASNHSGPLNHFSIQTKDEKDFDKQLKKDDKKRYKNDQQQQQQQQYQEEQIKFIDHSQQSFEQPTIYNQKEFTGGDVCIDLPYGGKIALPKGTVRTEKTTHTEVMVPYSLAKPFADNEKLIEIGESIAEISRAAFGSIKKLNRIQSRVFESAYKSNENILISAPTGAGKTNIALLTILHEIESNINPYGYLDKDNFKIIYIAPLKALASEMVEKFSNSLKYLGIVSKELTGDMQLTQKELKETQIIVTTPEKWDVITRKSSDVALTKLVRLIIIDEIHLLHEERGPVLECIVARTLRQVETTQEMIRIVGLSATLPNYKDVARFIRAPASGTHFFDSSYRPVPLTQNFIGVKDNQGIMVMKNNMNQLCYERLEKSLKEGHQVMIFVHSRKDTVKSAEILSDMAKEKHFRFSNEEPSFGAKKEFEKVKSKEIRSLFQHGISVHHAGLLRSDRNVVEKYFANGTIKVLVCTATLAWGVNLPAHTVIIKGTQVYNAKNGGFMDLGISDVMQIFGRAGRPQFDTSGEGFLLTSKDKLDHYLSLMSSSMPIESKFITNLEDHLNAEIVLGTVSNVNEAVNWLSYTYLFIRMLQNPLVYGIPSSQRSKDPQLEEFKREIIIRAAKKLEQCKMTRFDEQSENLGMTELGRIASHYYIKHPSIETFNEMLNDQLGQDQVLNILSNSSEFENITLREEESTELDKLAENQCYYELTVLDSHSKVKCLLQAFFSRANIDGFSLVSDSNYTVQNSSRILRGLFEISLKKGWCTVSKTILDLCKMVDHQLWHFESPLRQAKVLSLDTIRKIEERDWTPERICDMEIGELSFVLGNQLIAKTTRKIAQQFPQLDFEIQVQPITANIIRINMTLIPMFSWNDKMHGDSQPFWIWVQDNESQYIFHSEYFMLTKKIYNQTEPITLTCIIPLPNPMPSQFFLHYISDRWLGSEGIREISFRHLVLPQQDRVVNTELLDLQPLPKEALKNKDFESLFKFSHFNPIQTQVFHTLYYTNNNVLLGSPTGSGKTICAELAMFKVFRDEPHMKVVYIAPLKALVRERMNDWKVKFQEKLGKKLVELTGDYTPNMIALQNADIVTTTPEKWDGISRNWKNRSYVTSVSLLIIDEIHLIGELRGPILEVIVSRMKLISKQTGVNIRVVGLSTAMANAIDLSEWMGIDRVGLFNFRPSCRPVPIEVHIQGFQGKNYCPRMQTMNKPSFAAIATYSPKKPVLIFVSSRRQTRLTALDLISYLVVDNDPLQWIQKGFDIEPTLARVKDQHLRHTLSFGIGMHHAGLNDGDRTIVESLFGENKIQILISTSTLAWGVNLPAHLVIIKGTEYFDGKTKRYVDFPLTDVLQMIGRAGRPQFDKEGKAMVMVHEPKKQFYKKFLYDPFPVESHLKDFLHDHLNAEIVSGTIQSKQGAINYLVNTFFFRRLVVSPSYYGLEDNSVEAVNQYLSDLLDSTLADLEQSSCIEINEYDEIIPMSMGKIASFYYLNYKTVQNFSDNIKRDSDIKTLLRVLSDAAEYSEFPVRHNEEILNQELNENLPIKIGNYEDSHTKVHLLLQAHFQRCPLPITDFTTDTKSALDQGIRILQAMIDVSFEYGYFATAIQVIRLLQMLVQGRWDYDSSLMTLPHINKDFADFLSSNLILSNGEQISNLSDMLKIPRDKIHLSLTNIGLSDSQIKETLNVIDHLPKVKIEYFINTNNNSNNNDDNNNENNNNNNKKNNNNNNNNNKSIVYSGQEFNIKIKVTRENKKFSNGHAFAPLYSKDKDEGWIMVLTDEKEQMIGFKRVPQMISNSVTANFKIPKAPFQSSTNYNVKLYSDTYMGLDYFHTFQVPIVNKKQIRNDDQDGDTIILLEAATGDMKK.

The stretch at 31–88 forms a coiled coil; the sequence is EQVVARNKEIMKKRNEKKKEKDRIIEKGQLTWSYFSDSKQNKEKEKENRQIFNKFKEI. Residues 367-378 are compositionally biased toward basic and acidic residues; sequence QLKKDDKKRYKN. The interval 367 to 387 is disordered; the sequence is QLKKDDKKRYKNDQQQQQQQQ. One can recognise a Helicase ATP-binding 1 domain in the interval 492–675; sequence ESAYKSNENI…FIRAPASGTH (184 aa). 505-512 is a binding site for ATP; sequence APTGAGKT. The DEAH box signature appears at 617-620; that stretch reads DEIH. A Helicase C-terminal 1 domain is found at 705-920; the sequence is NMNQLCYERL…NVNEAVNWLS (216 aa). Residues 980–1286 enclose the SEC63 1 domain; the sequence is MTELGRIASH…GSEGIREISF (307 aa). Residues 1336 to 1511 form the Helicase ATP-binding 2 domain; that stretch reads HTLYYTNNNV…WMGIDRVGLF (176 aa). Residue 1349–1356 coordinates ATP; sequence SPTGSGKT. The DEAH box motif lies at 1453–1456; sequence DEIH. The region spanning 1545–1750 is the Helicase C-terminal 2 domain; that stretch reads SFAAIATYSP…GTIQSKQGAI (206 aa). In terms of domain architecture, SEC63 2 spans 1810 to 1969; it reads PMSMGKIASF…LPHINKDFAD (160 aa). The span at 2032–2062 shows a compositional bias: low complexity; it reads TNNNSNNNDDNNNENNNNNNKKNNNNNNNNN. Residues 2032 to 2064 form a disordered region; the sequence is TNNNSNNNDDNNNENNNNNNKKNNNNNNNNNKS.

This sequence belongs to the helicase family.

It is found in the nucleus. The protein resides in the cytoplasm. The protein localises to the cytosol. The enzyme catalyses Couples ATP hydrolysis with the unwinding of duplex DNA by translocating in the 3'-5' direction.. It carries out the reaction ATP + H2O = ADP + phosphate + H(+). ATPase involved both in DNA repair and rescue of stalled ribosomes. The sequence is that of Activating signal cointegrator 1 complex subunit 3 (ascc3) from Dictyostelium discoideum (Social amoeba).